The chain runs to 29 residues: GLPTCGETCFKGKCYTPGCSCSYPICKKN.

The segment at residues 1–29 (GLPTCGETCFKGKCYTPGCSCSYPICKKN) is a cross-link (cyclopeptide (Gly-Asn)). Intrachain disulfides connect cysteine 5/cysteine 19, cysteine 9/cysteine 21, and cysteine 14/cysteine 26.

Post-translationally, this is a cyclic peptide. In terms of processing, contains 3 disulfide bonds.

In terms of biological role, probably participates in a plant defense mechanism (Potential). Binds to and induces leakage in phospholipd membranes, particularly ones containing 1-palmitoyl-2-oleophosphatidylethanolamine (POPE). In vitro, displays cytotoxicity against cultured cells but no hemolytic activity towards fresh erythrocytes. Not active against Gram-negative bacterium E.coli ATCC 25922 or Gram-positive bacterium S.aureus ATCC 25923 up to a concentration of 64 uM. This is Cyclotide mela-7 from Melicytus latifolius (Norfolk Island mahoe).